A 1156-amino-acid polypeptide reads, in one-letter code: ATP-dependent RNA helicase glh-4 (1156 aa).

Disordered regions lie at residues 1–81 (MSFS…GAPS), 194–213 (TGVGASEVPTSKPSSFGQQP), 231–423 (SSSG…DSST), and 436–522 (HRAS…SGLG). A compositionally biased stretch (basic and acidic residues) spans 12-22 (AEVKVAEDVPE). Positions 24 to 34 (NVPPPVEPPRA) are enriched in pro residues. 3 stretches are compositionally biased toward polar residues: residues 60–73 (ITTSKTFGSQTTPK), 194–211 (TGVGASEVPTSKPSSFGQ), and 243–258 (TESSGFPTKETSTSQP). Residues 259-281 (GFGGDSSTGFGSGLKAGFGGHGA) show a composition bias toward gly residues. The span at 307–319 (ASSSNESAFGQQS) shows a compositional bias: polar residues. 2 stretches are compositionally biased toward gly residues: residues 321-332 (GFGGATKNGFGG) and 342-358 (SKAGFGGTSSSGIGGQK). Polar residues-rich tracts occupy residues 362–371 (TESSGFPTKE) and 395–406 (PSTTDSSSGQQT). A compositionally biased stretch (gly residues) spans 408–423 (GFGGASKPGFGGDSST). Polar residues-rich tracts occupy residues 440-451 (TAENSGLPTETT) and 464-476 (ASSSNESAFGQQS). The segment covering 478-489 (GFGGATKNGFGG) has biased composition (gly residues). CCHC-type zinc fingers lie at residues 570–587 (RGCHNCGEEGHISKECDK), 593–610 (FPCRNCEQLGHFASDCDQ), 616–633 (GPCRNCGIEGHFAVDCDQ), 639–656 (GPCRNCGQEGHFAKDCQN), and 665–682 (EPCRRCAEEGHWGYECPT). Positions 736-764 (SFDGFKILPQDLHDNLKRMKMNRPTPIQR) match the Q motif motif. The region spanning 767-951 (FFPIMHGNDV…LPKFVKEGYT (185 aa)) is the Helicase ATP-binding domain. 780–787 (AHTGSGKT) provides a ligand contact to ATP. The DEAD box motif lies at 897–900 (DEAD). The Helicase C-terminal domain maps to 986 to 1139 (GIDENTVTLL…EVPEWLTEGA (154 aa)). The interval 1135-1156 (LTEGAGHQEEGGDDWNEQEQEW) is disordered. Positions 1145 to 1156 (GGDDWNEQEQEW) are enriched in acidic residues.

The protein belongs to the DEAD box helicase family. DDX4/VASA subfamily. As to quaternary structure, interacts (via C-terminus) with kgb-1.

The enzyme catalyses ATP + H2O = ADP + phosphate + H(+). Functionally, probable ATP-binding RNA helicase. May act redundantly with the P-granule component glh-1 to regulate the formation of the granular structure of P-granules in embryos. May protect somatic cells from excessive apoptosis during normal development. The chain is ATP-dependent RNA helicase glh-4 from Caenorhabditis elegans.